A 379-amino-acid chain; its full sequence is Homoserine O-succinyltransferase (379 aa).

Residues 51 to 360 form the AB hydrolase-1 domain; that stretch reads NAVLICHALS…DAPQGHDAFL (310 aa). The active-site Nucleophile is S157. R227 provides a ligand contact to substrate. Active-site residues include D323 and H356. D357 is a substrate binding site.

The protein belongs to the AB hydrolase superfamily. MetX family. As to quaternary structure, homodimer.

It is found in the cytoplasm. It carries out the reaction L-homoserine + succinyl-CoA = O-succinyl-L-homoserine + CoA. It participates in amino-acid biosynthesis; L-methionine biosynthesis via de novo pathway; O-succinyl-L-homoserine from L-homoserine: step 1/1. Its activity is regulated as follows. Requires MetW for activity. Transfers a succinyl group from succinyl-CoA to L-homoserine, forming succinyl-L-homoserine. The chain is Homoserine O-succinyltransferase from Pseudomonas syringae pv. syringae (strain B728a).